We begin with the raw amino-acid sequence, 83 residues long: Bowman-Birk type proteinase inhibitor C-II (83 aa).

A propeptide spanning residues 1–7 (MELNLFK) is cleaved from the precursor. 7 cysteine pairs are disulfide-bonded: cysteine 21–cysteine 75, cysteine 22–cysteine 37, cysteine 25–cysteine 71, cysteine 27–cysteine 35, cysteine 45–cysteine 52, cysteine 49–cysteine 64, and cysteine 54–cysteine 62.

This sequence belongs to the Bowman-Birk serine protease inhibitor family.

The chain is Bowman-Birk type proteinase inhibitor C-II from Glycine max (Soybean).